A 470-amino-acid chain; its full sequence is 3-isopropylmalate dehydratase large subunit (470 aa).

The [4Fe-4S] cluster site is built by Cys-349, Cys-409, and Cys-412.

This sequence belongs to the aconitase/IPM isomerase family. LeuC type 1 subfamily. As to quaternary structure, heterodimer of LeuC and LeuD. It depends on [4Fe-4S] cluster as a cofactor.

It carries out the reaction (2R,3S)-3-isopropylmalate = (2S)-2-isopropylmalate. Its pathway is amino-acid biosynthesis; L-leucine biosynthesis; L-leucine from 3-methyl-2-oxobutanoate: step 2/4. Catalyzes the isomerization between 2-isopropylmalate and 3-isopropylmalate, via the formation of 2-isopropylmaleate. The chain is 3-isopropylmalate dehydratase large subunit from Methylobacterium radiotolerans (strain ATCC 27329 / DSM 1819 / JCM 2831 / NBRC 15690 / NCIMB 10815 / 0-1).